We begin with the raw amino-acid sequence, 154 residues long: Myoglobin (154 aa).

The Globin domain maps to 2–148 (GLSDGEWQLV…FRKDMASNYK (147 aa)). A Phosphoserine modification is found at serine 4. Histidine 65 is a binding site for nitrite. Histidine 65 lines the O2 pocket. Phosphothreonine is present on threonine 68. Histidine 94 contributes to the heme b binding site.

The protein belongs to the globin family. Monomeric.

The protein localises to the cytoplasm. Its subcellular location is the sarcoplasm. The enzyme catalyses Fe(III)-heme b-[protein] + nitric oxide + H2O = Fe(II)-heme b-[protein] + nitrite + 2 H(+). The catalysed reaction is H2O2 + AH2 = A + 2 H2O. Functionally, monomeric heme protein which primary function is to store oxygen and facilitate its diffusion within muscle tissues. Reversibly binds oxygen through a pentacoordinated heme iron and enables its timely and efficient release as needed during periods of heightened demand. Depending on the oxidative conditions of tissues and cells, and in addition to its ability to bind oxygen, it also has a nitrite reductase activity whereby it regulates the production of bioactive nitric oxide. Under stress conditions, like hypoxia and anoxia, it also protects cells against reactive oxygen species thanks to its pseudoperoxidase activity. In Pan troglodytes (Chimpanzee), this protein is Myoglobin (MB).